The primary structure comprises 218 residues: Glutathione S-transferase Mu 4 (218 aa).

The GST N-terminal domain maps to M1 to G88. Glutathione is bound by residues Y7–W8, W46–K50, N59–L60, and Q72–S73. Positions T90–L208 constitute a GST C-terminal domain. Residue Y116 participates in substrate binding.

It belongs to the GST superfamily. Mu family. Homodimer.

It localises to the cytoplasm. The catalysed reaction is RX + glutathione = an S-substituted glutathione + a halide anion + H(+). It catalyses the reaction 1-chloro-2,4-dinitrobenzene + glutathione = 2,4-dinitrophenyl-S-glutathione + chloride + H(+). It carries out the reaction (13S,14S)-epoxy-(4Z,7Z,9E,11E,16Z,19Z)-docosahexaenoate + glutathione = (13R)-S-glutathionyl-(14S)-hydroxy-(4Z,7Z,9E,11E,16Z,19Z)-docosahexaenoate. The enzyme catalyses leukotriene C4 = leukotriene A4 + glutathione. Functionally, conjugation of reduced glutathione to a wide number of exogenous and endogenous hydrophobic electrophiles. Catalyzes the conjugation of leukotriene A4 with reduced glutathione (GSH) to form leukotriene C4. Can also catalyze the transfer of a glutathionyl group from glutathione (GSH) to 13(S),14(S)-epoxy-docosahexaenoic acid to form maresin conjugate in tissue regeneration 1 (MCTR1), a bioactive lipid mediator that possess potent anti-inflammatory and proresolving actions. In Rattus norvegicus (Rat), this protein is Glutathione S-transferase Mu 4 (Gstm4).